The following is a 329-amino-acid chain: GTPase Obg (329 aa).

The 159-residue stretch at 1 to 159 (MQFIDQAIID…WSLQLELKLL (159 aa)) folds into the Obg domain. Residues 160 to 328 (AEVGIIGLPN…LLSSIWNELG (169 aa)) enclose the OBG-type G domain. Residues 166–173 (GLPNAGKS), 191–195 (FTTLI), 213–216 (DIPG), 280–283 (NKKE), and 309–311 (SAV) each bind ATP. The Mg(2+) site is built by Ser-173 and Thr-193.

The protein belongs to the TRAFAC class OBG-HflX-like GTPase superfamily. OBG GTPase family. Monomer. It depends on Mg(2+) as a cofactor.

Its subcellular location is the cytoplasm. Functionally, an essential GTPase which binds GTP, GDP and possibly (p)ppGpp with moderate affinity, with high nucleotide exchange rates and a fairly low GTP hydrolysis rate. Plays a role in control of the cell cycle, stress response, ribosome biogenesis and in those bacteria that undergo differentiation, in morphogenesis control. In Prochlorococcus marinus (strain NATL2A), this protein is GTPase Obg.